Consider the following 556-residue polypeptide: Trigger factor (556 aa).

Residues G169–P255 form the PPIase FKBP-type domain. Residues V438 to A452 are compositionally biased toward polar residues. The tract at residues V438–K556 is disordered. Positions P461 to A472 are enriched in acidic residues. Low complexity-rich tracts occupy residues E486–E503 and E511–T526.

Belongs to the FKBP-type PPIase family. Tig subfamily.

It is found in the cytoplasm. The enzyme catalyses [protein]-peptidylproline (omega=180) = [protein]-peptidylproline (omega=0). Functionally, involved in protein export. Acts as a chaperone by maintaining the newly synthesized protein in an open conformation. Functions as a peptidyl-prolyl cis-trans isomerase. This Synechococcus sp. (strain JA-2-3B'a(2-13)) (Cyanobacteria bacterium Yellowstone B-Prime) protein is Trigger factor.